Reading from the N-terminus, the 591-residue chain is General transcription and DNA repair factor IIH subunit TFB1-1 (591 aa).

2 BSD domains span residues 112-166 (STSS…GKDS) and 191-243 (RTNR…YLYS).

This sequence belongs to the TFB1 family. In terms of assembly, component of the 7-subunit TFIIH core complex composed of XPB, XPD, TFB1/GTF2H1, GTF2H2/P44, TFB4/GTF2H3, TFB2/GTF2H4 and TFB5/GTF2H5, which is active in NER. The core complex associates with the 3-subunit CDK-activating kinase (CAK) module composed of CYCH1/cyclin H1, CDKD and MAT1/At4g30820 to form the 10-subunit holoenzyme (holo-TFIIH) active in transcription.

Its subcellular location is the nucleus. In terms of biological role, component of the general transcription and DNA repair factor IIH (TFIIH) core complex, which is involved in general and transcription-coupled nucleotide excision repair (NER) of damaged DNA and, when complexed to CAK, in RNA transcription by RNA polymerase II. In NER, TFIIH acts by opening DNA around the lesion to allow the excision of the damaged oligonucleotide and its replacement by a new DNA fragment. In transcription, TFIIH has an essential role in transcription initiation. When the pre-initiation complex (PIC) has been established, TFIIH is required for promoter opening and promoter escape. Phosphorylation of the C-terminal tail (CTD) of the largest subunit of RNA polymerase II by the kinase module CAK controls the initiation of transcription. The protein is General transcription and DNA repair factor IIH subunit TFB1-1 of Arabidopsis thaliana (Mouse-ear cress).